Consider the following 541-residue polypeptide: Glucose-6-phosphate isomerase (541 aa).

E353 acts as the Proton donor in catalysis. Residues H384 and K504 contribute to the active site.

The protein belongs to the GPI family.

It is found in the cytoplasm. It catalyses the reaction alpha-D-glucose 6-phosphate = beta-D-fructose 6-phosphate. It functions in the pathway carbohydrate biosynthesis; gluconeogenesis. The protein operates within carbohydrate degradation; glycolysis; D-glyceraldehyde 3-phosphate and glycerone phosphate from D-glucose: step 2/4. Functionally, catalyzes the reversible isomerization of glucose-6-phosphate to fructose-6-phosphate. This is Glucose-6-phosphate isomerase from Deinococcus radiodurans (strain ATCC 13939 / DSM 20539 / JCM 16871 / CCUG 27074 / LMG 4051 / NBRC 15346 / NCIMB 9279 / VKM B-1422 / R1).